The primary structure comprises 334 residues: BTB and MATH domain-containing protein 39 (334 aa).

The 128-residue stretch at 14–141 folds into the MATH domain; the sequence is IVTLVFNIYN…EGRFQIEFDL (128 aa). The BTB domain maps to 164-229; the sequence is ADGELITDGK…LQLDSFEVSV (66 aa).

In Caenorhabditis elegans, this protein is BTB and MATH domain-containing protein 39 (bath-39).